The following is a 336-amino-acid chain: DNA topoisomerase 1B (336 aa).

In terms of domain architecture, Topo IB-type catalytic spans 79–336; that stretch reads EIHIQGAEKE…KSYRKDVLGE (258 aa). Residue Tyr-294 is the O-(3'-phospho-DNA)-tyrosine intermediate of the active site.

The protein belongs to the type IB topoisomerase family. As to quaternary structure, monomer.

It localises to the virion. The catalysed reaction is ATP-independent breakage of single-stranded DNA, followed by passage and rejoining.. Functionally, releases the supercoiling and torsional tension of DNA introduced during the DNA replication and transcription by transiently cleaving and rejoining one strand of the DNA duplex. Introduces a single-strand break via transesterification at a target site in duplex DNA. The scissile phosphodiester is attacked by the catalytic tyrosine of the enzyme, resulting in the formation of a DNA-(3'-phosphotyrosyl)-enzyme intermediate and the expulsion of a 5'-OH DNA strand. The free DNA strand then undergoes passage around the unbroken strand thus removing DNA supercoils. Finally, in the religation step, the DNA 5'-OH attacks the covalent intermediate to expel the active-site tyrosine and restore the DNA phosphodiester backbone. Cleaves DNA after CCCTT sequence. This is DNA topoisomerase 1B (TOP1E) from Acanthamoeba polyphaga mimivirus (APMV).